We begin with the raw amino-acid sequence, 628 residues long: (+)-alpha pinene synthase 1, chloroplastic (628 aa).

The transit peptide at 1–18 directs the protein to the chloroplast; the sequence is MALVSAVPLNSKLCLCRT. Positions 379, 383, and 531 each coordinate Mg(2+). Residues 379–383 carry the DDXXD motif motif; that stretch reads DDIYD.

Belongs to the terpene synthase family. Tpsd subfamily. The cofactor is Mg(2+). Mn(2+) serves as cofactor.

It localises to the plastid. Its subcellular location is the chloroplast. The enzyme catalyses (2E)-geranyl diphosphate = (1R,5R)-alpha-pinene + diphosphate. Its pathway is terpene metabolism; oleoresin biosynthesis. The protein operates within secondary metabolite biosynthesis; terpenoid biosynthesis. Its function is as follows. Monoterpene synthase (TPS) involved in the biosynthesis of monoterpene natural products included in conifer oleoresin secretions and volatile emissions; these compounds contribute to biotic and abiotic stress defense against herbivores and pathogens. Catalyzes the conversion of (2E)-geranyl diphosphate (GPP) to (+)-alpha-pinene. The chain is (+)-alpha pinene synthase 1, chloroplastic from Pinus banksiana (Jack pine).